Consider the following 609-residue polypeptide: Oxidoreductase tpcJ (609 aa).

The first 16 residues, 1-16 (MITVIKWLVSGCCALA), serve as a signal peptide directing secretion. Residues N63, N107, N113, N240, N283, N471, and N601 are each glycosylated (N-linked (GlcNAc...) asparagine). Plastocyanin-like domains follow at residues 66 to 186 (VSQQ…HGPS), 196 to 351 (PWLL…RYDE), and 429 to 567 (VDWK…EQPK).

It belongs to the multicopper oxidase family. As to expression, specifically expressed in conidia.

It participates in secondary metabolite biosynthesis. Its function is as follows. Oxidoreductase; part of the gene cluster that mediates the biosynthesis of trypacidin, a mycotoxin with antiprotozoal activity and that plays a role in the infection process. The pathway begins with the synthesis of atrochrysone thioester by the polyketide synthase (PKS) tpcC. The atrochrysone carboxyl ACP thioesterase tpcB then breaks the thioester bond and releases the atrochrysone carboxylic acid from tpcC. The decarboxylase tpcK converts atrochrysone carboxylic acid to atrochrysone which is further reduced into emodin anthrone. The next step is performed by the emodin anthrone oxygenase tpcL that catalyzes the oxidation of emodinanthrone to emodin. Emodin O-methyltransferase encoded by tpcA catalyzes methylation of the 8-hydroxy group of emodin to form questin. Ring cleavage of questin by questin oxidase tpcI leads to desmethylsulochrin via several intermediates including questin epoxide. Another methylation step catalyzed by tpcM leads to the formation of sulochrin which is further converted to monomethylsulfochrin by tpcH. Finally, the tpcJ catalyzes the conversion of monomethylsulfochrin to trypacidin. Trypacidin is toxic for human pulmonary and bronchial epithelial cells by initiating the intracellular formation of nitric oxide (NO) and hydrogen peroxide (H(2)O(2)), thus triggering host necrotic cell death. The trypacidin pathway is also able to produce endocrocin via a distinct route from the endocrocin Enc pathway. This is Oxidoreductase tpcJ from Aspergillus fumigatus (strain ATCC MYA-4609 / CBS 101355 / FGSC A1100 / Af293) (Neosartorya fumigata).